Consider the following 879-residue polypeptide: Leucine--tRNA ligase (879 aa).

The 'HIGH' region motif lies at 46–56 (PYPSGALHMGH). The short motif at 638–642 (KMSKS) is the 'KMSKS' region element. Lys641 is a binding site for ATP.

It belongs to the class-I aminoacyl-tRNA synthetase family.

The protein localises to the cytoplasm. It catalyses the reaction tRNA(Leu) + L-leucine + ATP = L-leucyl-tRNA(Leu) + AMP + diphosphate. The protein is Leucine--tRNA ligase of Xanthomonas campestris pv. campestris (strain 8004).